A 997-amino-acid polypeptide reads, in one-letter code: P3N-PIPO polyprotein (997 aa).

Residues 173–313 (IVCVDDVNNL…VLFYSDVEHY (141 aa)) enclose the Peptidase S30 domain. Catalysis depends on for P1 proteinase activity residues E235 and S267. An Involved in interaction with stylet and aphid transmission motif is present at residues 365–368 (KLSC). Residues 621–623 (PTK) carry the Involved in virions binding and aphid transmission motif. In terms of domain architecture, Peptidase C6 spans 647–769 (MYIAKEGYCY…QSEMKHYRVG (123 aa)). Active-site for helper component proteinase activity residues include C655 and H728.

Belongs to the potyviridae P3N-PIPO polyprotein family. Interacts (via PIPO domain) with host PCaP1 protein; this interaction may help to anchor the movement complex to the plasma membrane from which the complex could move to the plasmodesmata. In terms of processing, potyviral RNA is expressed as two polyproteins which undergo post-translational proteolytic processing. Genome polyprotein is processed by NIa-pro, P1 and HC-pro proteinases resulting in the production of at least ten individual proteins. P3N-PIPO is cleaved by P1 and HC-pro proteinases resulting in the production of three individual proteins. The P1 proteinase and the HC-pro cleave only their respective C-termini autocatalytically.

It localises to the host cell junction. The protein resides in the host plasmodesma. The enzyme catalyses Hydrolyzes a Gly-|-Gly bond at its own C-terminus, commonly in the sequence -Tyr-Xaa-Val-Gly-|-Gly, in the processing of the potyviral polyprotein.. In terms of biological role, required for aphid transmission and also has proteolytic activity. Only cleaves a Gly-Gly dipeptide at its own C-terminus. Interacts with virions and aphid stylets. Acts as a suppressor of RNA-mediated gene silencing, also known as post-transcriptional gene silencing (PTGS), a mechanism of plant viral defense that limits the accumulation of viral RNAs. May have RNA-binding activity. Functionally, allows efficient cell to cell propagation, by bypassing the host cell wall barrier. Transports viral genome to neighboring plant cells directly through plasmosdesmata, without any budding. This chain is P3N-PIPO polyprotein, found in Citrullus lanatus (Watermelon).